The primary structure comprises 379 residues: Lipid-A-disaccharide synthase (379 aa).

This sequence belongs to the LpxB family.

It catalyses the reaction a lipid X + a UDP-2-N,3-O-bis[(3R)-3-hydroxyacyl]-alpha-D-glucosamine = a lipid A disaccharide + UDP + H(+). It functions in the pathway bacterial outer membrane biogenesis; LPS lipid A biosynthesis. Condensation of UDP-2,3-diacylglucosamine and 2,3-diacylglucosamine-1-phosphate to form lipid A disaccharide, a precursor of lipid A, a phosphorylated glycolipid that anchors the lipopolysaccharide to the outer membrane of the cell. This Aeromonas hydrophila subsp. hydrophila (strain ATCC 7966 / DSM 30187 / BCRC 13018 / CCUG 14551 / JCM 1027 / KCTC 2358 / NCIMB 9240 / NCTC 8049) protein is Lipid-A-disaccharide synthase.